The primary structure comprises 1235 residues: ATP-dependent helicase/nuclease subunit A (1235 aa).

One can recognise a UvrD-like helicase ATP-binding domain in the interval 12–482; it reads SLWTDDQWKA…IDLSQNFRSR (471 aa). 33–40 contributes to the ATP binding site; the sequence is AAAGSGKT. In terms of domain architecture, UvrD-like helicase C-terminal spans 509–800; it reads AAELTLGANF…RMMTIHASKG (292 aa).

Belongs to the helicase family. AddA subfamily. In terms of assembly, heterodimer of AddA and AddB/RexB. Requires Mg(2+) as cofactor.

The catalysed reaction is Couples ATP hydrolysis with the unwinding of duplex DNA by translocating in the 3'-5' direction.. The enzyme catalyses ATP + H2O = ADP + phosphate + H(+). Functionally, the heterodimer acts as both an ATP-dependent DNA helicase and an ATP-dependent, dual-direction single-stranded exonuclease. Recognizes the chi site generating a DNA molecule suitable for the initiation of homologous recombination. The AddA nuclease domain is required for chi fragment generation; this subunit has the helicase and 3' -&gt; 5' nuclease activities. In Listeria monocytogenes serovar 1/2a (strain ATCC BAA-679 / EGD-e), this protein is ATP-dependent helicase/nuclease subunit A.